The following is a 283-amino-acid chain: MNELNVVNDINHAGNWLIRNQELLFGYVINLTSAIIILISGMFIAKIISNGVNQILITRHIDATIAGFLSALMRYIIITFTLIASLGRIGVQTTSVIAILGAAGMAIGLALQGSLSNFAAGVLLVTLRPLKTGEYVNLGNVAGTVLNIHIFYTTLRTLDGKIVVVPNNKIISGNIINYSREPARRNEFSISVSYNTDIDLVIKVLKRVIENEDRVMKDRDIVIGLSELAPSSLNFIIRCWSSTDELNAVYWDLMVKFKKELDKNNINIPYPQIDVHLYKKNKN.

3 helical membrane passes run 24–44, 64–84, and 96–116; these read LFGY…GMFI, TIAG…TLIA, and VIAI…GSLS.

It belongs to the MscS (TC 1.A.23) family.

The protein localises to the cell membrane. This is an uncharacterized protein from Buchnera aphidicola subsp. Schizaphis graminum (strain Sg).